Reading from the N-terminus, the 80-residue chain is Large ribosomal subunit protein bL28 (80 aa).

The disordered stretch occupies residues 1-23; the sequence is MARVCQITGKKTRTGNNVSHANN.

Belongs to the bacterial ribosomal protein bL28 family.

The protein is Large ribosomal subunit protein bL28 of Cytophaga hutchinsonii (strain ATCC 33406 / DSM 1761 / CIP 103989 / NBRC 15051 / NCIMB 9469 / D465).